Reading from the N-terminus, the 655-residue chain is p-hydroxybenzoic acid efflux pump subunit AaeB (655 aa).

Transmembrane regions (helical) follow at residues 13–33 (FAVK…HFQL), 38–58 (WAVL…GGEP), 69–89 (LRII…ISMI), 93–113 (LLMI…SSLV), 121–141 (WGLS…EPLL), 152–172 (EIVI…PRSI), 370–390 (LFWL…IAVV), 407–427 (FIYG…VIIP), 431–451 (QSML…GIEV), 459–479 (MGAL…TFHF), and 482–502 (FLDS…VILL).

The protein belongs to the aromatic acid exporter ArAE (TC 2.A.85) family.

The protein localises to the cell inner membrane. In terms of biological role, forms an efflux pump with AaeA. Could function as a metabolic relief valve, allowing to eliminate certain compounds when they accumulate to high levels in the cell. The sequence is that of p-hydroxybenzoic acid efflux pump subunit AaeB from Salmonella agona (strain SL483).